Consider the following 510-residue polypeptide: Probable gamma-aminobutyrate transaminase 3, mitochondrial (510 aa).

A mitochondrion-targeting transit peptide spans 1–41 (MICRSLLLLRSNAASKASSIVKHVAATGCLPEYSSEAPARY). 166–167 (GS) lines the pyridoxal 5'-phosphate pocket. A substrate-binding site is contributed by Tyr-199. Residue Asp-306 coordinates pyridoxal 5'-phosphate. Residue Lys-335 coordinates substrate. N6-(pyridoxal phosphate)lysine is present on Lys-335.

Belongs to the class-III pyridoxal-phosphate-dependent aminotransferase family.

The protein localises to the mitochondrion. The enzyme catalyses 4-aminobutanoate + pyruvate = succinate semialdehyde + L-alanine. It carries out the reaction 4-aminobutanoate + glyoxylate = succinate semialdehyde + glycine. Its function is as follows. Transaminase that degrades gamma-amino butyric acid (GABA). This is Probable gamma-aminobutyrate transaminase 3, mitochondrial from Oryza sativa subsp. indica (Rice).